A 208-amino-acid polypeptide reads, in one-letter code: dTTP/UTP pyrophosphatase (208 aa).

Catalysis depends on Asp79, which acts as the Proton acceptor.

The protein belongs to the Maf family. YhdE subfamily. Requires a divalent metal cation as cofactor.

It localises to the cytoplasm. It catalyses the reaction dTTP + H2O = dTMP + diphosphate + H(+). It carries out the reaction UTP + H2O = UMP + diphosphate + H(+). Functionally, nucleoside triphosphate pyrophosphatase that hydrolyzes dTTP and UTP. May have a dual role in cell division arrest and in preventing the incorporation of modified nucleotides into cellular nucleic acids. The protein is dTTP/UTP pyrophosphatase of Mesorhizobium japonicum (strain LMG 29417 / CECT 9101 / MAFF 303099) (Mesorhizobium loti (strain MAFF 303099)).